The following is a 552-amino-acid chain: Steroid transmembrane transporter SLC22A24 (552 aa).

12 helical membrane-spanning segments follow: residues 16-36 (FQIC…PNIV), 146-166 (SMVQ…YGHL), 178-200 (LCFL…LVYC), 204-226 (FLAG…EWTL), 234-254 (IMVL…LAFA), 260-280 (ILQL…WKMV), 350-370 (VFGL…LILN), 380-400 (LFQI…LLTL), 407-427 (ISQI…TFLP), 435-455 (VVLA…ASVH), 474-492 (VSGR…LMAY), and 496-516 (LPWI…LLLP).

Belongs to the major facilitator (TC 2.A.1) superfamily. Organic cation transporter (TC 2.A.1.19) family. As to expression, localized to the kidney. Highly specific expression pattern in the nephron, localized to segment 3 of the proximal tubule.

The protein resides in the cell membrane. The catalysed reaction is estrone 3-sulfate(out) + glutarate(in) = estrone 3-sulfate(in) + glutarate(out). It carries out the reaction 17beta-estradiol 17-O-(beta-D-glucuronate)(out) + glutarate(in) = 17beta-estradiol 17-O-(beta-D-glucuronate)(in) + glutarate(out). The enzyme catalyses taurocholate(out) + glutarate(in) = taurocholate(in) + glutarate(out). It catalyses the reaction 5alpha-androstane-3alpha,17beta-diol 3-O-(beta-D-glucuronate)(out) + glutarate(in) = 5alpha-androstane-3alpha,17beta-diol 3-O-(beta-D-glucuronate)(in) + glutarate(out). The catalysed reaction is glycocholate(out) + glutarate(in) = glycocholate(in) + glutarate(out). It carries out the reaction dehydroepiandrosterone 3-sulfate(out) + glutarate(in) = dehydroepiandrosterone 3-sulfate(in) + glutarate(out). The enzyme catalyses glutarate(in) + succinate(out) = glutarate(out) + succinate(in). Transport is chloride sensitive and transtimulated by glutaric acid. Transport is inhibited by anionic compounds from different chemical classes. Functionally, renal transmembrane organic anion/dicarboxylate exchanger that participates in the reabsorption of conjugated steroids including estradiol-17beta-D-glucuronide (or 17beta-estradiol 17-O-(beta-D-glucuronate)), androstanediol glucuronide (or 5alpha-androstane-3alpha,17beta-diol 3-O-(beta-D-glucuronate)), and estrone 3-sulfate, as well as bile acids taurocholate and glycocholate, driven by an outward gradient of dicarboxylates such as glutarate or succinate. Similar uptake function as Isoform 1. Its function is as follows. Lack of transporter activity. This is Steroid transmembrane transporter SLC22A24 from Homo sapiens (Human).